Here is a 215-residue protein sequence, read N- to C-terminus: MRTGIIAQKIGMTSVFNDKGERIALTLVKVDDCQVVGHKTLEKHGYNALVIGVKDKKISRVTKPMKQVFANAKISPKTKLKEFRISEENFIDVAASLEVDHFMAGQFVDITAITIGKGFAGSMKRHNFRGLEASHGVSISHRSHGSTGQRQDPGKVFKGKKMAGHMGCNQVTIQNLKIFAVDKDRKLIMIQGSIPGHKNSYLSIKDAIKKISITI.

Residues 136-155 are disordered; the sequence is GVSISHRSHGSTGQRQDPGK. Glutamine 151 carries the post-translational modification N5-methylglutamine.

It belongs to the universal ribosomal protein uL3 family. In terms of assembly, part of the 50S ribosomal subunit. Forms a cluster with proteins L14 and L19. Methylated by PrmB.

Functionally, one of the primary rRNA binding proteins, it binds directly near the 3'-end of the 23S rRNA, where it nucleates assembly of the 50S subunit. This is Large ribosomal subunit protein uL3 from Rickettsia canadensis (strain McKiel).